A 380-amino-acid polypeptide reads, in one-letter code: 2-aminoethylphosphonate--pyruvate transaminase (380 aa).

At Lys204 the chain carries N6-(pyridoxal phosphate)lysine.

This sequence belongs to the class-V pyridoxal-phosphate-dependent aminotransferase family. PhnW subfamily. As to quaternary structure, homodimer. Pyridoxal 5'-phosphate serves as cofactor.

It carries out the reaction (2-aminoethyl)phosphonate + pyruvate = phosphonoacetaldehyde + L-alanine. Involved in phosphonate degradation. The protein is 2-aminoethylphosphonate--pyruvate transaminase of Aeromonas hydrophila subsp. hydrophila (strain ATCC 7966 / DSM 30187 / BCRC 13018 / CCUG 14551 / JCM 1027 / KCTC 2358 / NCIMB 9240 / NCTC 8049).